Consider the following 217-residue polypeptide: MALKLDVKAPGGKVEGSIELPAELFDAPANIALMHQVVTAQRAAARQGTHSTKTRGDVSGGGRKPYRQKGTGRARQGSTRAPQFTGGGVVHGPKPRDYSQRTPKKMIAAALRGALSDRARNGRIHAITELVSGQTPSTKSAKAFLGTLTERKQVLVVIGRSDEAGAKSVRNLPGVHILAPDQLNTYDVLRADDVVFSVEALRAYIAANTGTPEEVSA.

Residues 42 to 100 form a disordered region; sequence RAAARQGTHSTKTRGDVSGGGRKPYRQKGTGRARQGSTRAPQFTGGGVVHGPKPRDYSQ.

It belongs to the universal ribosomal protein uL4 family. Part of the 50S ribosomal subunit.

Functionally, one of the primary rRNA binding proteins, this protein initially binds near the 5'-end of the 23S rRNA. It is important during the early stages of 50S assembly. It makes multiple contacts with different domains of the 23S rRNA in the assembled 50S subunit and ribosome. Its function is as follows. Forms part of the polypeptide exit tunnel. The polypeptide is Large ribosomal subunit protein uL4 (Mycobacterium avium (strain 104)).